Consider the following 313-residue polypeptide: DDRGK domain-containing protein 1 (313 aa).

Residues 1–28 (MVSPVVYLVVAALLVGLILFLTRGRGRA) traverse the membrane as a helical segment. The segment at 1–113 (MVSPVVYLVV…IEKPVETHLS (113 aa)) is mediates interaction with CDK5RAP3. Residues 29-313 (AAAAQEPLHN…GRETPAQAPA (285 aa)) lie on the Cytoplasmic side of the membrane. Residues 40-88 (EVPAAAGRVARPQPLEPEEQRAAGRPRRRRDLGSRLQAQRRAQRVAWAD) form a disordered region. Ser-73 and Ser-113 each carry phosphoserine. Low complexity predominate over residues 73–87 (SRLQAQRRAQRVAWA). A mediates interaction with TRIP4 region spans residues 117–215 (GAKKLRKLEE…MTEEQSHSFL (99 aa)). Residues 130–185 (RKAQREAEEAEREERKRLESQREAEWKKEEERLRLEEEQKEEEERKAQEEQAQREH) are disordered. Residues 194 to 208 (TFVVVEEGVGETMTE) carry the UFM1-interacting motif (UFIM) motif. The tract at residues 215–313 (LAEFINYIKQ…GRETPAQAPA (99 aa)) is mediates interaction with UFL1. One can recognise a PCI domain in the interval 228 to 272 (VLLEDLASQVGLRTQDTINRIQDLLAEGTLTGVIDDRGKFIYITP). Lys-266 participates in a covalent cross-link: Glycyl lysine isopeptide (Lys-Gly) (interchain with G-Cter in UFM1).

It belongs to the DDRGK1 family. In terms of assembly, component of the UFM1 ribosome E3 ligase (UREL) complex, composed of UFL1, DDRGK1 and CDK5RAP3. Interacts with (unphosphorylated) ERN1/IRE1-alpha; interaction is dependent on UFM1 and takes place in response to endoplasmic reticulum stress, regulating ERN1/IRE1-alpha stability. Interacts with NFKBIA. Interacts with SOX9. Ubiquitinated. Ubiquitination probably triggers proteasomal degradation and is negatively regulated by UFL1, the enzyme involved in the ufmylation of DDRGK1. Post-translationally, ufmylated; conjugated to ubiquitin-like protein UFM1, probably at Lys-266 by UFL1. The relevance of ufmylation is however unclear: as DDRGK1 acts as a substrate adapter for ufmylation, it is uncertain whether ufmylation is a collateral effect of the ufmylation process or whether it is required to regulate its activity.

The protein resides in the endoplasmic reticulum membrane. In terms of biological role, component of the UFM1 ribosome E3 ligase (UREL) complex, a multiprotein complex that catalyzes ufmylation of endoplasmic reticulum-docked proteins. The UREL complex plays a key role in ribosome recycling by mediating mono-ufmylation of the RPL26/uL24 subunit of the 60S ribosome following ribosome dissociation: ufmylation weakens the junction between post-termination 60S subunits and SEC61 translocons, promoting release and recycling of the large ribosomal subunit from the endoplasmic reticulum membrane. Ufmylation of RPL26/uL24 and subsequent 60S ribosome recycling either take place after normal termination of translation or after ribosome stalling during cotranslational translocation at the endoplasmic reticulum. Within the UREL complex, DDRGK1 tethers the complex to the endoplasmic reticulum membrane to restrict its activity to endoplasmic reticulum-docked ribosomes and acts as an ufmylation 'reader': following RPL26/uL24 ufmylation, DDRGK1 specifically binds to ufmylated RPL26/uL24 via its UFIM motif, resulting in stable association between the 60S ribosome and the UREL complex, followed by dissociation of the 60S ribosome subunit from the endoplasmic reticulum membrane. The UREL complex is also involved in reticulophagy in response to endoplasmic reticulum stress by promoting ufmylation of proteins such as CYB5R3 and RPN1, thereby promoting lysosomal degradation of ufmylated proteins. Ufmylation-dependent reticulophagy inhibits the unfolded protein response (UPR) by regulating ERN1/IRE1-alpha stability. Acts as a regulator of immunity by promoting differentiation of B-cells into plasma cells: acts by promoting expansion of the endoplasmic reticulum and regulating the unfolded protein response (UPR). May also be required for TRIP4 ufmylation. May play a role in NF-kappa-B-mediated transcription through regulation of the phosphorylation and the degradation of NFKBIA, the inhibitor of NF-kappa-B. Plays a role in cartilage development through SOX9, inhibiting the ubiquitin-mediated proteasomal degradation of this transcriptional regulator. Required for stabilization and ufmylation of ATG9A. This Bos taurus (Bovine) protein is DDRGK domain-containing protein 1.